The following is a 1029-amino-acid chain: Toll-like receptor 9 (1029 aa).

The first 24 residues, 1-24, serve as a signal peptide directing secretion; the sequence is MGPYCAPHPLSLLVQAAALAAALA. The Extracellular portion of the chain corresponds to 25-815; sequence EGTLPAFLPC…LCLDETLSLD (791 aa). Cysteine 34 and cysteine 44 are joined by a disulfide. 46–50 is a DNA binding site; sequence WLFLK. LRR repeat units lie at residues 61-84, 86-109, 121-146, 149-165, 166-189, 197-220, 222-241, 242-267, 282-305, 307-331, 332-355, 362-385, 389-412, 414-439, 469-492, 494-517, 518-541, 543-570, 572-596, 598-620, 625-648, 650-673, 674-697, 699-721, 722-745, and 747-770; these read RANVTSLSLISNRIHHLHDSDFVH, SNLRVLNLKWNCPPAGLSPMHFPC, VPTLEELNLSYNGITTVPALPSSLVS, LSHTSILVLGPTHFTGL, HALRFLYMDGNCYYMNPCPRALEV, LGNLTHLSLKYNNLTEVPRRLPPS, DTLLLSYNHIVTLAPEDLAN, LTALRVLDVGGNCRRCDHARNPCREC, LSRLEGLVLKDSSLYKLEKDWFRG, GRLQVLDLSENFLYDYITKTTIFND, LTQLRRLNLSFNYHKKVSFAHLHL, LVSLEKLDMHGIFFRSLTNITLQS, LPKLQSLHLQLNFINQAQLSIFGA, PSLLFVDLSDNRISGAATPAAALGEV, CNLNFTLDLSRNNLVTIQQEMFTR, SRLQCLRLSHNSISQAVNGSQFVP, LTSLRVLDLSHNKLDLYHGRSFTE, PQLEALDLSYNSQPFSMQGVGHNLSFVA, LPSLRYLSLAHNGIHSRVSQKLSSA, LRALDFSGNSLSQMWAEGDLYLC, LRNLVQLDLSENHLHTLLPRHLDN, PKSLRQLRLRDNNLAFFNWSSLTV, LPRLEALDLAGNQLKALSNGSLPP, IRLQKLDVSSNSIGFVIPGFFVR, ATRLIELNLSANALKTVDPSWFGS, and AGTLKILDVSANPLHCACGAAFVD. N-linked (GlcNAc...) asparagine glycosylation is present at asparagine 63. Residues 71 to 76 and 94 to 108 each bind DNA; these read SNRIHH and KWNCPPAGLSPMHFP. Cysteines 97 and 109 form a disulfide. N-linked (GlcNAc...) asparagine glycosylation occurs at asparagine 128. Tyrosine 131 contributes to the DNA binding site. The cysteines at positions 177 and 183 are disulfide-linked. Residue 178–180 participates in DNA binding; sequence YYM. Residue asparagine 199 is glycosylated (N-linked (GlcNAc...) asparagine). Residue tyrosine 207 coordinates DNA. N-linked (GlcNAc...) asparagine glycosylation is found at asparagine 209 and asparagine 241. Disulfide bonds link cysteine 254/cysteine 267 and cysteine 257/cysteine 264. A lipid anchor (S-palmitoyl cysteine) is attached at cysteine 257. Arginine 261 is a binding site for DNA. A lipid anchor (S-palmitoyl cysteine) is attached at cysteine 264. N-linked (GlcNAc...) asparagine glycans are attached at residues asparagine 339 and asparagine 380. A disulfide bond links cysteine 469 and cysteine 498. N-linked (GlcNAc...) asparagine glycosylation is found at asparagine 472 and asparagine 511. Asparagine 565 is a glycosylation site (N-linked (GlcNAc...) asparagine). 2 N-linked (GlcNAc...) asparagine glycosylation sites follow: asparagine 667 and asparagine 692. N-linked (GlcNAc...) asparagine glycosylation is present at asparagine 729. Disulfide bonds link cysteine 762–cysteine 788 and cysteine 764–cysteine 807. Residues 816-836 form a helical membrane-spanning segment; sequence CFGLSLLMVALGLAVPMLHHL. The Cytoplasmic segment spans residues 837-1029; the sequence is CGWDLWYCFH…NFCRGPTTAE (193 aa). The TIR domain occupies 864-1009; it reads LLYDAVVVFD…SFWANLGIAL (146 aa).

Belongs to the Toll-like receptor family. In terms of assembly, monomer and homodimer. Exists as a monomer in the absence of unmethylated cytidine-phosphate-guanosine (CpG) ligand. Proteolytic processing of an insertion loop (Z-loop) is required for homodimerization upon binding to the unmethylated CpG ligand leading to its activation. Interacts with MYD88 via their respective TIR domains. Interacts with BTK. Interacts (via transmembrane domain) with UNC93B1. Interacts with CD300LH; the interaction may promote full activation of TLR9-triggered innate responses. Interacts with CNPY3 and HSP90B1; this interaction is required for proper folding in the endoplasmic reticulum. Interacts with SMPDL3B. Interacts with CD82; this interaction is essential for TLR9-dependent myddosome formation in response to CpG stimulation. In terms of processing, activated by proteolytic cleavage of the flexible loop between repeats LRR14 and LRR15 within the ectodomain. Cleavage requires UNC93B1. Proteolytically processed by first removing the majority of the ectodomain by either asparagine endopeptidase (AEP) or a cathepsin followed by a trimming event that is solely cathepsin mediated and required for optimal receptor signaling. Palmitoylated by ZDHHC3 in the Golgi regulates TLR9 trafficking from the Golgi to endosomes. Depalmitoylation by PPT1 controls the release of TLR9 from UNC93B1 in endosomes.

Its subcellular location is the endoplasmic reticulum membrane. It is found in the endosome. The protein resides in the lysosome. The protein localises to the cytoplasmic vesicle. It localises to the phagosome. In terms of biological role, key component of innate and adaptive immunity. TLRs (Toll-like receptors) control host immune response against pathogens through recognition of molecular patterns specific to microorganisms. TLR9 is a nucleotide-sensing TLR which is activated by unmethylated cytidine-phosphate-guanosine (CpG) dinucleotides. Acts via MYD88 and TRAF6, leading to NF-kappa-B activation, cytokine secretion and the inflammatory response. Upon CpG stimulation, induces B-cell proliferation, activation, survival and antibody production. The sequence is that of Toll-like receptor 9 (TLR9) from Bos taurus (Bovine).